A 309-amino-acid polypeptide reads, in one-letter code: 4-hydroxy-3-methylbut-2-enyl diphosphate reductase (309 aa).

Cysteine 13 lines the [4Fe-4S] cluster pocket. Residues histidine 42 and histidine 75 each contribute to the (2E)-4-hydroxy-3-methylbut-2-enyl diphosphate site. Positions 42 and 75 each coordinate dimethylallyl diphosphate. Residues histidine 42 and histidine 75 each contribute to the isopentenyl diphosphate site. Position 97 (cysteine 97) interacts with [4Fe-4S] cluster. Histidine 125 contributes to the (2E)-4-hydroxy-3-methylbut-2-enyl diphosphate binding site. Histidine 125 contacts dimethylallyl diphosphate. Isopentenyl diphosphate is bound at residue histidine 125. Catalysis depends on glutamate 127, which acts as the Proton donor. Residue threonine 165 coordinates (2E)-4-hydroxy-3-methylbut-2-enyl diphosphate. Position 195 (cysteine 195) interacts with [4Fe-4S] cluster. Residues serine 223, serine 224, asparagine 225, and serine 267 each contribute to the (2E)-4-hydroxy-3-methylbut-2-enyl diphosphate site. Positions 223, 224, 225, and 267 each coordinate dimethylallyl diphosphate. 4 residues coordinate isopentenyl diphosphate: serine 223, serine 224, asparagine 225, and serine 267.

This sequence belongs to the IspH family. [4Fe-4S] cluster is required as a cofactor.

The enzyme catalyses isopentenyl diphosphate + 2 oxidized [2Fe-2S]-[ferredoxin] + H2O = (2E)-4-hydroxy-3-methylbut-2-enyl diphosphate + 2 reduced [2Fe-2S]-[ferredoxin] + 2 H(+). It carries out the reaction dimethylallyl diphosphate + 2 oxidized [2Fe-2S]-[ferredoxin] + H2O = (2E)-4-hydroxy-3-methylbut-2-enyl diphosphate + 2 reduced [2Fe-2S]-[ferredoxin] + 2 H(+). The protein operates within isoprenoid biosynthesis; dimethylallyl diphosphate biosynthesis; dimethylallyl diphosphate from (2E)-4-hydroxy-3-methylbutenyl diphosphate: step 1/1. It functions in the pathway isoprenoid biosynthesis; isopentenyl diphosphate biosynthesis via DXP pathway; isopentenyl diphosphate from 1-deoxy-D-xylulose 5-phosphate: step 6/6. In terms of biological role, catalyzes the conversion of 1-hydroxy-2-methyl-2-(E)-butenyl 4-diphosphate (HMBPP) into a mixture of isopentenyl diphosphate (IPP) and dimethylallyl diphosphate (DMAPP). Acts in the terminal step of the DOXP/MEP pathway for isoprenoid precursor biosynthesis. This is 4-hydroxy-3-methylbut-2-enyl diphosphate reductase from Chlamydia abortus (strain DSM 27085 / S26/3) (Chlamydophila abortus).